Here is an 889-residue protein sequence, read N- to C-terminus: DNA gyrase subunit A (889 aa).

The 467-residue stretch at 35–501 (LPDVRDGLKP…GFEDLEDEDL (467 aa)) folds into the Topo IIA-type catalytic domain. Tyr123 serves as the catalytic O-(5'-phospho-DNA)-tyrosine intermediate. Positions 528-534 (QNRGGRG) match the GyrA-box motif. The segment at 810 to 889 (VKEDAEDETN…IQQSSDEDEE (80 aa)) is disordered. The span at 813 to 823 (DAEDETNEDEQ) shows a compositional bias: acidic residues. The span at 863–875 (DGRIEVRQDFMDR) shows a compositional bias: basic and acidic residues. Residues 876-889 (VEEDIQQSSDEDEE) are compositionally biased toward acidic residues.

Belongs to the type II topoisomerase GyrA/ParC subunit family. Heterotetramer, composed of two GyrA and two GyrB chains. In the heterotetramer, GyrA contains the active site tyrosine that forms a transient covalent intermediate with DNA, while GyrB binds cofactors and catalyzes ATP hydrolysis.

It localises to the cytoplasm. It catalyses the reaction ATP-dependent breakage, passage and rejoining of double-stranded DNA.. Functionally, a type II topoisomerase that negatively supercoils closed circular double-stranded (ds) DNA in an ATP-dependent manner to modulate DNA topology and maintain chromosomes in an underwound state. Negative supercoiling favors strand separation, and DNA replication, transcription, recombination and repair, all of which involve strand separation. Also able to catalyze the interconversion of other topological isomers of dsDNA rings, including catenanes and knotted rings. Type II topoisomerases break and join 2 DNA strands simultaneously in an ATP-dependent manner. This chain is DNA gyrase subunit A, found in Staphylococcus aureus (strain N315).